A 435-amino-acid chain; its full sequence is Methionine aminopeptidase 2 (435 aa).

The segment at 1 to 87 (MAAQVADGVA…TQTKPPRVPV (87 aa)) is disordered. Residues 10–19 (ADLKLDDTKS) show a composition bias toward basic and acidic residues. Over residues 20–29 (KPTNGTTQNG) the composition is skewed to polar residues. Positions 32 to 46 (EHEDSDDDNEGEEGA) are enriched in acidic residues. Residues 55-68 (KKKKKRKPRKKKKA) show a composition bias toward basic residues. His-199 serves as a coordination point for substrate. Positions 219, 230, and 299 each coordinate a divalent metal cation. His-307 contacts substrate. A divalent metal cation-binding residues include Glu-332 and Glu-427.

Belongs to the peptidase M24A family. Methionine aminopeptidase eukaryotic type 2 subfamily. Co(2+) serves as cofactor. Requires Zn(2+) as cofactor. It depends on Mn(2+) as a cofactor. The cofactor is Fe(2+).

The protein localises to the cytoplasm. It catalyses the reaction Release of N-terminal amino acids, preferentially methionine, from peptides and arylamides.. Its function is as follows. Cotranslationally removes the N-terminal methionine from nascent proteins. The N-terminal methionine is often cleaved when the second residue in the primary sequence is small and uncharged (Met-Ala-, Cys, Gly, Pro, Ser, Thr, or Val). The polypeptide is Methionine aminopeptidase 2 (Phaeosphaeria nodorum (strain SN15 / ATCC MYA-4574 / FGSC 10173) (Glume blotch fungus)).